The following is a 496-amino-acid chain: 6-phosphogluconate dehydrogenase, decarboxylating (496 aa).

Residues 13–18 (GLDVSI), 24–26 (DNV), 68–70 (ITH), and Asn96 each bind NADP(+). Substrate contacts are provided by residues Asn96 and 122 to 124 (SGG). The active-site Proton acceptor is Lys178. 181–182 (HN) is a binding site for substrate. Residue Glu185 is the Proton donor of the active site. Substrate contacts are provided by Arg300 and His468. Residues 476–496 (PGEDPGPVSKGPHHYEWRPAK) are disordered.

It belongs to the 6-phosphogluconate dehydrogenase family. Homodimer.

The protein localises to the cytoplasm. The catalysed reaction is 6-phospho-D-gluconate + NADP(+) = D-ribulose 5-phosphate + CO2 + NADPH. It participates in carbohydrate degradation; pentose phosphate pathway; D-ribulose 5-phosphate from D-glucose 6-phosphate (oxidative stage): step 3/3. Functionally, catalyzes the oxidative decarboxylation of 6-phosphogluconate to ribulose 5-phosphate and CO(2), with concomitant reduction of NADP to NADPH. This chain is 6-phosphogluconate dehydrogenase, decarboxylating, found in Emericella nidulans (strain FGSC A4 / ATCC 38163 / CBS 112.46 / NRRL 194 / M139) (Aspergillus nidulans).